The following is a 266-amino-acid chain: Mitochondrial genome maintenance protein MGM101 (266 aa).

A mitochondrion-targeting transit peptide spans 1–23; the sequence is MLHSTKLVFRATPQALCFPVRSY. Polar residues-rich tracts occupy residues 37 to 47 and 57 to 68; these read KTTSKLAPSIT and PSLQEPQSATST. Residues 37–68 are disordered; that stretch reads KTTSKLAPSITTEDEVAEQDPSLQEPQSATST.

It belongs to the MGM101 family. Forms homooligomers in vitro.

It localises to the mitochondrion matrix. Its subcellular location is the mitochondrion nucleoid. Its function is as follows. Plays a role in the replication of the mitochondrial genome and the maintenance of its telomeres. Able to catalyze strand annealing and D-loop formation. Binds a wide variety of DNA substrates. Exhibited the highest affinity for DNA molecules carrying 3' ssDNA overhangs (Y-form, 3' FLAP, 3' overhang) and for substrates with complex structures (X-O and Fork). Forms homogeneous ring-shaped structures at the ssDNA native telomeres ends. Oligomers seem to bind to the ssDNA as a filament until they reach the double-stranded region and induce the formation of bends and loops within the double-stranded part of the molecules. In Candida parapsilosis (strain CDC 317 / ATCC MYA-4646) (Yeast), this protein is Mitochondrial genome maintenance protein MGM101.